The chain runs to 229 residues: Ribonuclease 3 (229 aa).

The RNase III domain maps to 4–133; the sequence is WEELQESVGF…FIGALYLDNG (130 aa). Position 46 (E46) interacts with Mg(2+). The active site involves D50. Residues D119 and E122 each contribute to the Mg(2+) site. The active site involves E122. Positions 159 to 228 constitute a DRBM domain; the sequence is DYKTQLQEIV…AQFAINQLTH (70 aa).

Belongs to the ribonuclease III family. As to quaternary structure, homodimer. Mg(2+) serves as cofactor.

Its subcellular location is the cytoplasm. It carries out the reaction Endonucleolytic cleavage to 5'-phosphomonoester.. Its function is as follows. Digests double-stranded RNA. Involved in the processing of primary rRNA transcript to yield the immediate precursors to the large and small rRNAs (23S and 16S). Processes some mRNAs, and tRNAs when they are encoded in the rRNA operon. Processes pre-crRNA and tracrRNA of type II CRISPR loci if present in the organism. The protein is Ribonuclease 3 of Listeria monocytogenes serotype 4b (strain CLIP80459).